A 197-amino-acid chain; its full sequence is Presequence translocated-associated motor subunit PAM17, mitochondrial (197 aa).

A mitochondrion-targeting transit peptide spans 1–14 (MFTSAIRLSSQRLF). The next 2 helical transmembrane spans lie at 64–84 (INVGSSLFTALLGCNVSWAYL) and 103–123 (VISAGIIASGALGYLLGPIVG).

Belongs to the PAM17 family. Component of the PAM complex, at least composed of mtHsp70, MGE1, TIM44, PAM16, PAM17 and PAM18/TIM14.

The protein resides in the mitochondrion inner membrane. In terms of biological role, component of the PAM complex, a complex required for the translocation of transit peptide-containing proteins from the inner membrane into the mitochondrial matrix in an ATP-dependent manner. In the complex, it is required to organize PAM16-PAM18 (TIM16-TIM14) heterodimer. This chain is Presequence translocated-associated motor subunit PAM17, mitochondrial (PAM17), found in Saccharomyces cerevisiae (strain ATCC 204508 / S288c) (Baker's yeast).